A 221-amino-acid polypeptide reads, in one-letter code: Endo-1,4-beta-xylanase 11A (221 aa).

Residues 1-18 (MKFATVLAFATAAGAAFA) form the signal peptide. The region spanning 23-220 (SSETTEAGQL…GTGSASMSVS (198 aa)) is the GH11 domain. The active-site Nucleophile is Glu-111. The N-linked (GlcNAc...) asparagine glycan is linked to Asn-117. Glu-207 serves as the catalytic Proton donor.

The protein belongs to the glycosyl hydrolase 11 (cellulase G) family.

The protein localises to the secreted. It carries out the reaction Endohydrolysis of (1-&gt;4)-beta-D-xylosidic linkages in xylans.. The protein operates within glycan degradation; xylan degradation. Functionally, endo-1,4-beta-xylanase involved in the hydrolysis of xylan, a major structural heterogeneous polysaccharide found in plant biomass representing the second most abundant polysaccharide in the biosphere, after cellulose. The polypeptide is Endo-1,4-beta-xylanase 11A (XYN11A) (Mycosarcoma maydis (Corn smut fungus)).